Consider the following 50-residue polypeptide: Major pollen allergen Ole e 6 (50 aa).

3 disulfide bridges follow: C8/C34, C12/C30, and C16/C26.

In terms of tissue distribution, expressed in pollen.

In Olea europaea (Common olive), this protein is Major pollen allergen Ole e 6 (OLE6).